The primary structure comprises 215 residues: MRFFLDSANIDEIREANRLGVISGVTTNPSLIAKEGRNFREVVQEIAAIVDGPISAEVISTDAEGMIAEARELAKIHPNIVIKIPLCAAGLSATARLAQEGIRTNVTLIFSANQGLLAANAGATYVSPFVGRLDDIGHDGMDVLRELVEIFDIHGIATEIIAASIRHPVHVSAAARAGAPIATVPFKVLMQLVKHPLTDLGIERFLKDWESVKDK.

Lysine 83 (schiff-base intermediate with substrate) is an active-site residue.

Belongs to the transaldolase family. Type 3B subfamily.

The protein resides in the cytoplasm. The enzyme catalyses D-sedoheptulose 7-phosphate + D-glyceraldehyde 3-phosphate = D-erythrose 4-phosphate + beta-D-fructose 6-phosphate. It functions in the pathway carbohydrate degradation; pentose phosphate pathway; D-glyceraldehyde 3-phosphate and beta-D-fructose 6-phosphate from D-ribose 5-phosphate and D-xylulose 5-phosphate (non-oxidative stage): step 2/3. In terms of biological role, transaldolase is important for the balance of metabolites in the pentose-phosphate pathway. The protein is Probable transaldolase of Heliobacterium modesticaldum (strain ATCC 51547 / Ice1).